The chain runs to 309 residues: HPr kinase/phosphorylase (309 aa).

Catalysis depends on residues His138 and Lys159. 153–160 provides a ligand contact to ATP; the sequence is GDSGIGKS. Ser160 provides a ligand contact to Mg(2+). Catalysis depends on Asp177, which acts as the Proton acceptor; for phosphorylation activity. Proton donor; for dephosphorylation activity. The segment at 201 to 210 is important for the catalytic mechanism of both phosphorylation and dephosphorylation; it reads LEIRGVGIID. Position 202 (Glu202) interacts with Mg(2+). The active site involves Arg243. An important for the catalytic mechanism of dephosphorylation region spans residues 264 to 269; sequence PVKTGR.

It belongs to the HPrK/P family. Homohexamer. It depends on Mg(2+) as a cofactor.

It carries out the reaction [HPr protein]-L-serine + ATP = [HPr protein]-O-phospho-L-serine + ADP + H(+). The enzyme catalyses [HPr protein]-O-phospho-L-serine + phosphate + H(+) = [HPr protein]-L-serine + diphosphate. Functionally, catalyzes the ATP- as well as the pyrophosphate-dependent phosphorylation of a specific serine residue in HPr, a phosphocarrier protein of the phosphoenolpyruvate-dependent sugar phosphotransferase system (PTS). HprK/P also catalyzes the pyrophosphate-producing, inorganic phosphate-dependent dephosphorylation (phosphorolysis) of seryl-phosphorylated HPr (P-Ser-HPr). The two antagonistic activities of HprK/P are regulated by several intracellular metabolites, which change their concentration in response to the absence or presence of rapidly metabolisable carbon sources (glucose, fructose, etc.) in the growth medium. Therefore, by controlling the phosphorylation state of HPr, HPrK/P is a sensor enzyme that plays a major role in the regulation of carbon metabolism and sugar transport: it mediates carbon catabolite repression (CCR), and regulates PTS-catalyzed carbohydrate uptake and inducer exclusion. This is HPr kinase/phosphorylase from Streptococcus thermophilus (strain CNRZ 1066).